The chain runs to 210 residues: Large ribosomal subunit protein uL3 (210 aa).

The disordered stretch occupies residues 133–156 (ASHGNSLSHRVPGSIGQNQTPGKV). N5-methylglutamine is present on Q151.

It belongs to the universal ribosomal protein uL3 family. Part of the 50S ribosomal subunit. Forms a cluster with proteins L14 and L19. Methylated by PrmB.

Functionally, one of the primary rRNA binding proteins, it binds directly near the 3'-end of the 23S rRNA, where it nucleates assembly of the 50S subunit. In Hamiltonella defensa subsp. Acyrthosiphon pisum (strain 5AT), this protein is Large ribosomal subunit protein uL3.